Consider the following 226-residue polypeptide: Nucleoside triphosphate pyrophosphatase (226 aa).

Residue Asp-79 is the Proton acceptor of the active site. The segment at 204-226 (WSRGTSTHPTPGTSATPKPNPGA) is disordered. The segment covering 206–220 (RGTSTHPTPGTSATP) has biased composition (polar residues).

It belongs to the Maf family. The cofactor is a divalent metal cation.

The protein resides in the cytoplasm. It carries out the reaction a ribonucleoside 5'-triphosphate + H2O = a ribonucleoside 5'-phosphate + diphosphate + H(+). The catalysed reaction is a 2'-deoxyribonucleoside 5'-triphosphate + H2O = a 2'-deoxyribonucleoside 5'-phosphate + diphosphate + H(+). Functionally, nucleoside triphosphate pyrophosphatase. May have a dual role in cell division arrest and in preventing the incorporation of modified nucleotides into cellular nucleic acids. In Salinispora tropica (strain ATCC BAA-916 / DSM 44818 / JCM 13857 / NBRC 105044 / CNB-440), this protein is Nucleoside triphosphate pyrophosphatase.